The following is a 97-amino-acid chain: ESAT-6-like protein EsxS (97 aa).

This sequence belongs to the WXG100 family. CFP-10 subfamily. Forms a tight complex with EsxR. Exists in heterodimeric and heterotetrameric forms.

The protein resides in the secreted. The sequence is that of ESAT-6-like protein EsxS from Mycobacterium tuberculosis (strain ATCC 25618 / H37Rv).